Reading from the N-terminus, the 368-residue chain is Transcription factor TGA1 (368 aa).

A compositionally biased stretch (polar residues) spans 53-65; sequence LDNNVSEDTSHGT. The tract at residues 53-83 is disordered; sequence LDNNVSEDTSHGTAGTPHMFDQEASTSRHPD. The region spanning 82–145 is the bZIP domain; that stretch reads PDKIQRRLAQ…NGIDTNSLGF (64 aa). 2 coiled-coil regions span residues 83–131 and 261–281; these read DKIQ…RQQG and NLKQSCQQAEDALTQGMEKLQ. The interval 84–104 is basic motif; that stretch reads KIQRRLAQNREAARKSRLRKK. The segment at 110 to 124 is leucine-zipper; that stretch reads LETSRLKLIQLEQEL. Residues 153–363 enclose the DOG1 domain; sequence IAAFEMEYGH…RALSSSWATR (211 aa). Cysteine 260 and cysteine 266 are oxidised to a cystine.

The protein belongs to the bZIP family. Binds DNA as a dimer. The reduced form interacts with NPR1. As to expression, predominantly expressed in roots.

It localises to the nucleus. In terms of biological role, transcriptional activator that binds specifically to the DNA sequence 5'-TGACG-3'. Recognizes ocs elements like the as-1 motif of the cauliflower mosaic virus 35S promoter. Binding to the as-1-like cis elements mediate auxin- and salicylic acid-inducible transcription. May be involved in the induction of the systemic acquired resistance (SAR) via its interaction with NPR1. Could also bind to the Hex-motif (5'-TGACGTGG-3') another cis-acting element found in plant histone promoters. This Arabidopsis thaliana (Mouse-ear cress) protein is Transcription factor TGA1 (TGA1).